The sequence spans 103 residues: Small ribosomal subunit protein uS10 (103 aa).

This sequence belongs to the universal ribosomal protein uS10 family. Part of the 30S ribosomal subunit.

In terms of biological role, involved in the binding of tRNA to the ribosomes. This is Small ribosomal subunit protein uS10 from Mycoplasmopsis pulmonis (strain UAB CTIP) (Mycoplasma pulmonis).